The chain runs to 326 residues: MEKDSLSRADQQYECVAEIGEGAYGKVFKARDLKNGGRFVALKRVRVQTSEEGMPLSTIREVAVLRHLETFEHPNVVRLFDVCTVSRTDRETKLTLVFEHVDQDLTTYLDKVPEPGVPTETIKDMMFQLLRGLDFLHSHRVVHRDLKPQNILVTSSGQIKLADFGLARIYSFQMALTSVVVTLWYRAPEVLLQSSYATPVDLWSVGCIFAEMFRRKPLFRGSSDVDQLGKILDIIGLPGEEDWPRDVALPRQAFHSKSAQPIEKFVTDIDELGKDLLLKCLTFNPAKRISAYGALNHPYFQDLERYKDNLNSHLPSNQSTSELNTA.

The residue at position 1 (Met-1) is an N-acetylmethionine. A phosphotyrosine mark is found at Tyr-13 and Tyr-24. The Protein kinase domain maps to 13-300 (YECVAEIGEG…AYGALNHPYF (288 aa)). Residues 19-27 (IGEGAYGKV) and Lys-43 each bind ATP. Residues Thr-49 and Thr-70 each carry the phosphothreonine modification. Residue Asp-145 is the Proton acceptor of the active site. Phosphothreonine is present on Thr-177. Lys-264 is subject to N6-acetyllysine. Ser-319 bears the Phosphoserine mark. The residue at position 325 (Thr-325) is a Phosphothreonine.

The protein belongs to the protein kinase superfamily. CMGC Ser/Thr protein kinase family. CDC2/CDKX subfamily. Interaction with D-type G1 cyclins. Cyclin binding promotes enzyme activation by phosphorylation at Thr-177. Binds to RUNX1, CDKN2D, FBXO7 and CDKN2C/p18-INK4c. Forms a cytoplasmic complex with Hsp90/HSP90AB1 and CDC37. FBXO7-binding promotes D-type cyclin binding. Thr-177 phosphorylation and Tyr-24 dephosphorylation promotes kinase activity. As to expression, expressed in subgranular zone (SGZ) of the hippocampal dentate gyrus (DG) and the subventricular zone (SVZ) of the lateral ventricles whose neural precursor cells (NPC) give rise to dentate granule neurons and olfactory bulb (OB) interneurons, respectively. Expressed in the neuroepithelium of the cerebral cortex of the developing brain.

Its subcellular location is the cytoplasm. The protein resides in the nucleus. It is found in the cell projection. The protein localises to the ruffle. It localises to the cytoskeleton. Its subcellular location is the microtubule organizing center. The protein resides in the centrosome. It carries out the reaction L-seryl-[protein] + ATP = O-phospho-L-seryl-[protein] + ADP + H(+). The catalysed reaction is L-threonyl-[protein] + ATP = O-phospho-L-threonyl-[protein] + ADP + H(+). Its activity is regulated as follows. Activated by Thr-177 phosphorylation and Tyr-24 dephosphorylation. Rapidly down-regulated prior to cell differentiation (e.g. erythroid and osteoblast). Its function is as follows. Serine/threonine-protein kinase involved in the control of the cell cycle and differentiation; promotes G1/S transition. Phosphorylates pRB/RB1 and NPM1. Interacts with D-type G1 cyclins during interphase at G1 to form a pRB/RB1 kinase and controls the entrance into the cell cycle. Involved in initiation and maintenance of cell cycle exit during cell differentiation; prevents cell proliferation and negatively regulates cell differentiation, but is required for the proliferation of specific cell types (e.g. erythroid and hematopoietic cells). Essential for cell proliferation within the dentate gyrus of the hippocampus and the subventricular zone of the lateral ventricles. Required during thymocyte development. Promotes the production of newborn neurons, probably by modulating G1 length. Promotes, at least in astrocytes, changes in patterns of gene expression, changes in the actin cytoskeleton including loss of stress fibers, and enhanced motility during cell differentiation. Prevents myeloid differentiation by interfering with RUNX1 and reducing its transcription transactivation activity, but promotes proliferation of normal myeloid progenitors. Delays senescence. Promotes the proliferation of beta-cells in pancreatic islets of Langerhans. May play a role in the centrosome organization during the cell cycle phases. The protein is Cyclin-dependent kinase 6 (Cdk6) of Mus musculus (Mouse).